The primary structure comprises 150 residues: Large ribosomal subunit protein bL9 (150 aa).

It belongs to the bacterial ribosomal protein bL9 family.

Binds to the 23S rRNA. The sequence is that of Large ribosomal subunit protein bL9 from Streptococcus sanguinis (strain SK36).